Here is a 380-residue protein sequence, read N- to C-terminus: Small ribosomal subunit protein uS3m (380 aa).

Belongs to the universal ribosomal protein uS3 family.

Its subcellular location is the mitochondrion. In terms of biological role, essential for mitochondrial protein synthesis and required for the maturation of small ribosomal subunits. The polypeptide is Small ribosomal subunit protein uS3m (VAR1) (Cyberlindnera mrakii (Yeast)).